Consider the following 234-residue polypeptide: 3-deoxy-manno-octulosonate cytidylyltransferase (234 aa).

It belongs to the KdsB family.

It localises to the cytoplasm. It catalyses the reaction 3-deoxy-alpha-D-manno-oct-2-ulosonate + CTP = CMP-3-deoxy-beta-D-manno-octulosonate + diphosphate. The protein operates within nucleotide-sugar biosynthesis; CMP-3-deoxy-D-manno-octulosonate biosynthesis; CMP-3-deoxy-D-manno-octulosonate from 3-deoxy-D-manno-octulosonate and CTP: step 1/1. It participates in bacterial outer membrane biogenesis; lipopolysaccharide biosynthesis. Functionally, activates KDO (a required 8-carbon sugar) for incorporation into bacterial lipopolysaccharide in Gram-negative bacteria. This is 3-deoxy-manno-octulosonate cytidylyltransferase from Aquifex aeolicus (strain VF5).